The sequence spans 75 residues: uncharacterized protein (75 aa).

This is an uncharacterized protein from Equus caballus (Horse).